The primary structure comprises 172 residues: MAKHEIEERGDGLIEKMVAVNRVTKVVKGGRIMAFSALTVVGDGDGRIGMGKGKSKEVPVAVQKAMDQARRSMIKVPLKNGTIHHEVIGRHGATKVFMQPAKEGSGVKAGGPMRLVFDAMGIHNISAKVHGSTNPYNIVRATLDGLSKLHTPADIAAKRGLTVEDILGVNHG.

The 64-residue stretch at 13–76 (LIEKMVAVNR…DQARRSMIKV (64 aa)) folds into the S5 DRBM domain.

The protein belongs to the universal ribosomal protein uS5 family. As to quaternary structure, part of the 30S ribosomal subunit. Contacts proteins S4 and S8.

With S4 and S12 plays an important role in translational accuracy. In terms of biological role, located at the back of the 30S subunit body where it stabilizes the conformation of the head with respect to the body. The sequence is that of Small ribosomal subunit protein uS5 from Neisseria gonorrhoeae (strain ATCC 700825 / FA 1090).